The chain runs to 619 residues: Chaperone protein HscA homolog (619 aa).

Belongs to the heat shock protein 70 family.

In terms of biological role, chaperone involved in the maturation of iron-sulfur cluster-containing proteins. Has a low intrinsic ATPase activity which is markedly stimulated by HscB. This Shewanella frigidimarina (strain NCIMB 400) protein is Chaperone protein HscA homolog.